We begin with the raw amino-acid sequence, 301 residues long: 33 kDa chaperonin (301 aa).

Cystine bridges form between Cys239–Cys241 and Cys272–Cys275.

Belongs to the HSP33 family. Under oxidizing conditions two disulfide bonds are formed involving the reactive cysteines. Under reducing conditions zinc is bound to the reactive cysteines and the protein is inactive.

It is found in the cytoplasm. Its function is as follows. Redox regulated molecular chaperone. Protects both thermally unfolding and oxidatively damaged proteins from irreversible aggregation. Plays an important role in the bacterial defense system toward oxidative stress. This chain is 33 kDa chaperonin, found in Nostoc sp. (strain PCC 7120 / SAG 25.82 / UTEX 2576).